We begin with the raw amino-acid sequence, 144 residues long: MVALKTCSLLLVLLFLAVGLGEKEEVEFRSHAKFAGPRPRGPRYAEGTFISDYSIAMDKIRQQDFVNWLLAQKGKKNDWKHNLTQREARALELAGQSQRNEEKEAQGSSLPKSLSDEDVLRDLLIQELLAWMADQAELCRLRSQ.

Residues Met1–Gly21 form the signal peptide. Propeptides lie at residues Glu22 to Pro42 and Glu87 to Gln144. Residues Glu92–Lys112 form a disordered region.

It belongs to the glucagon family. Highly expressed in the duodenum and jejunum.

It is found in the secreted. Potent stimulator of insulin secretion and relatively poor inhibitor of gastric acid secretion. The polypeptide is Gastric inhibitory polypeptide (Gip) (Rattus norvegicus (Rat)).